The primary structure comprises 260 residues: Phosphatidylglycerol--prolipoprotein diacylglyceryl transferase (260 aa).

The next 3 helical transmembrane spans lie at 16–36, 55–75, and 87–107; these read LEFRWYGLMYILGFIAAYFIV, VIFSLAIGVILGGRLGYILFY, and LFAVWEGGMSFHGGLLGVILA. Arg138 lines the a 1,2-diacyl-sn-glycero-3-phospho-(1'-sn-glycerol) pocket. Transmembrane regions (helical) follow at residues 198 to 218 and 232 to 252; these read GVVFWTFIAFYGLFRFLVEFF and FSMGQLLSFPMFLLGLTMAVL.

This sequence belongs to the Lgt family.

It localises to the cell inner membrane. It carries out the reaction L-cysteinyl-[prolipoprotein] + a 1,2-diacyl-sn-glycero-3-phospho-(1'-sn-glycerol) = an S-1,2-diacyl-sn-glyceryl-L-cysteinyl-[prolipoprotein] + sn-glycerol 1-phosphate + H(+). It functions in the pathway protein modification; lipoprotein biosynthesis (diacylglyceryl transfer). In terms of biological role, catalyzes the transfer of the diacylglyceryl group from phosphatidylglycerol to the sulfhydryl group of the N-terminal cysteine of a prolipoprotein, the first step in the formation of mature lipoproteins. This Geobacter sulfurreducens (strain ATCC 51573 / DSM 12127 / PCA) protein is Phosphatidylglycerol--prolipoprotein diacylglyceryl transferase.